A 118-amino-acid polypeptide reads, in one-letter code: Small ribosomal subunit protein uS13 (118 aa).

Positions S94–K118 are disordered.

The protein belongs to the universal ribosomal protein uS13 family. As to quaternary structure, part of the 30S ribosomal subunit. Forms a loose heterodimer with protein S19. Forms two bridges to the 50S subunit in the 70S ribosome.

Its function is as follows. Located at the top of the head of the 30S subunit, it contacts several helices of the 16S rRNA. In the 70S ribosome it contacts the 23S rRNA (bridge B1a) and protein L5 of the 50S subunit (bridge B1b), connecting the 2 subunits; these bridges are implicated in subunit movement. Contacts the tRNAs in the A and P-sites. In Colwellia psychrerythraea (strain 34H / ATCC BAA-681) (Vibrio psychroerythus), this protein is Small ribosomal subunit protein uS13.